An 808-amino-acid chain; its full sequence is Phosphoinositide phosphatase SAC2 (808 aa).

The 394-residue stretch at 158-551 (LCTVDLTKDF…GDTLALQYGG (394 aa)) folds into the SAC domain. Residues 429–476 (FQNQNPSTLENDDGECSTYDPPSKDETAPNLVVENGNDSKDAKEDQQK) are disordered. The segment covering 465–476 (NDSKDAKEDQQK) has biased composition (basic and acidic residues). A Phosphatase catalytic core motif is present at residues 487–498 (RTNCIDCLDRTN).

In terms of assembly, component of the PI(3,5)P2 regulatory complex at least composed of ATG18, SAC/FIG4, FAB1 and VAC14. Requires Mg(2+) as cofactor. As to expression, ubiquitous with a higher level of expression in young seedlings than in other tissues.

It localises to the vacuole membrane. It catalyses the reaction a 1,2-diacyl-sn-glycero-3-phospho-(1D-myo-inositol-3,5-bisphosphate) + H2O = a 1,2-diacyl-sn-glycero-3-phospho-(1D-myo-inositol-3-phosphate) + phosphate. The PI(3,5)P2 regulatory complex regulates both the synthesis and turnover of phosphatidylinositol 3,5-bisphosphate (PtdIns(3,5)P2). The polypeptide is Phosphoinositide phosphatase SAC2 (SAC2) (Arabidopsis thaliana (Mouse-ear cress)).